We begin with the raw amino-acid sequence, 380 residues long: MKTPIRKTHPVMKIANTALVDLPSPSNISTWWNFGSLLGLFLTMQIITGIILAMHYTSEVDMAFDSISHITRNVNYGWLMRTMHMNGAAFMFICMYAHMGRGMYYSSYMLAETWNIGIIIMIATMATAFMGYVLPWGQMSFWGATVITNLVSAIPYIGTDIVYWLWGGFSVGKATLSRFFAFHFVLPFVLIALSGVHLLFLHQTGSNNPLGLNSNLDKIPFHSFFSWKDLLGFAXMILIFCTITLTFPLIMGDPENFNPANPLSTPPHIQPEWYFLFAYAILRSIPNKLGGVVALVGSLIIPATMMLTHKSMLQPMSFRPISQVIFWLFCANFIALSWIGAAPVEDPYITLGQVFSMLYFLFFLTAPMINMLEKKLSLKQ.

A run of 4 helical transmembrane segments spans residues 34–54 (FGSL…ILAM), 78–100 (WLMR…AHMG), 113–133 (TWNI…MGYV), and 179–199 (FFAF…VHLL). Histidine 84 and histidine 98 together coordinate heme b. Residues histidine 183 and histidine 197 each contribute to the heme b site. Residue histidine 202 coordinates a ubiquinone. A run of 4 helical transmembrane segments spans residues 225–245 (FSWK…TITL), 289–309 (LGGV…MLTH), 324–344 (VIFW…AAPV), and 349–369 (ITLG…APMI).

This sequence belongs to the cytochrome b family. The main subunits of complex b-c1 are: cytochrome b, cytochrome c1 and the Rieske protein. Requires heme b as cofactor.

The protein localises to the mitochondrion inner membrane. Functionally, component of the ubiquinol-cytochrome c reductase complex (complex III or cytochrome b-c1 complex) that is part of the mitochondrial respiratory chain. The b-c1 complex mediates electron transfer from ubiquinol to cytochrome c. Contributes to the generation of a proton gradient across the mitochondrial membrane that is then used for ATP synthesis. This is Cytochrome b (mt:Cyt-b) from Xenoturbella bocki (Marine worm).